Here is a 136-residue protein sequence, read N- to C-terminus: uncharacterized protein (136 aa).

Its subcellular location is the mitochondrion. This is an uncharacterized protein from Marchantia polymorpha (Common liverwort).